The sequence spans 67 residues: UPF0434 protein Bcep1808_2639 (67 aa).

Belongs to the UPF0434 family.

The protein is UPF0434 protein Bcep1808_2639 of Burkholderia vietnamiensis (strain G4 / LMG 22486) (Burkholderia cepacia (strain R1808)).